The chain runs to 331 residues: Anthranilate phosphoribosyltransferase (331 aa).

5-phospho-alpha-D-ribose 1-diphosphate contacts are provided by residues glycine 81, 84–85 (GD), serine 89, 91–94 (NCST), 109–117 (KHGNRAVSS), and serine 121. Residue glycine 81 participates in anthranilate binding. Serine 93 contributes to the Mg(2+) binding site. An anthranilate-binding site is contributed by asparagine 112. Position 167 (arginine 167) interacts with anthranilate. Mg(2+) contacts are provided by aspartate 226 and glutamate 227.

It belongs to the anthranilate phosphoribosyltransferase family. Homodimer. Mg(2+) serves as cofactor.

It carries out the reaction N-(5-phospho-beta-D-ribosyl)anthranilate + diphosphate = 5-phospho-alpha-D-ribose 1-diphosphate + anthranilate. It functions in the pathway amino-acid biosynthesis; L-tryptophan biosynthesis; L-tryptophan from chorismate: step 2/5. Functionally, catalyzes the transfer of the phosphoribosyl group of 5-phosphorylribose-1-pyrophosphate (PRPP) to anthranilate to yield N-(5'-phosphoribosyl)-anthranilate (PRA). This Oleidesulfovibrio alaskensis (strain ATCC BAA-1058 / DSM 17464 / G20) (Desulfovibrio alaskensis) protein is Anthranilate phosphoribosyltransferase.